Reading from the N-terminus, the 433-residue chain is Malate synthase (433 aa).

16–17 (TS) serves as a coordination point for acetyl-CoA. Residue aspartate 52 participates in Mg(2+) binding. Residue arginine 84 participates in acetyl-CoA binding. Glyoxylate is bound by residues arginine 84, glutamate 158, and 191–192 (VD). Mg(2+) contacts are provided by glutamate 158 and aspartate 192. Acetyl-CoA contacts are provided by arginine 236 and leucine 259. Aspartate 388 functions as the Proton acceptor in the catalytic mechanism.

It belongs to the HpcH/HpaI aldolase family. As to quaternary structure, homotrimer and homohexamer in equilibrium. It depends on Mg(2+) as a cofactor.

It is found in the cytoplasm. The enzyme catalyses glyoxylate + acetyl-CoA + H2O = (S)-malate + CoA + H(+). It functions in the pathway carbohydrate metabolism; glyoxylate cycle; (S)-malate from isocitrate: step 2/2. Its function is as follows. Involved in the glyoxylate cycle which synthesizes precursors for carbohydrates from C2 compounds such as acetate. Catalyzes the Claisen condensation between acetyl-coenzyme A (acetyl-CoA) and glyoxylate to form the malyl-CoA intermediate that is subsequently hydrolyzed to produce malate and CoA. This Haloferax volcanii (strain ATCC 29605 / DSM 3757 / JCM 8879 / NBRC 14742 / NCIMB 2012 / VKM B-1768 / DS2) (Halobacterium volcanii) protein is Malate synthase (aceB).